The following is a 79-amino-acid chain: Neurotoxin ShK-like1 (79 aa).

The N-terminal stretch at 1–25 (MSRKLLAVLMVCTFFLIAASMGTNA) is a signal peptide. Residues 26-35 (LPFHEGIERR) constitute a propeptide that is removed on maturation. The ShKT domain maps to 39 to 78 (CVDKMPFVCMRKDIPAICKNRNHRSYAFIMDVCRKTCGQC). Intrachain disulfides connect Cys-39–Cys-78, Cys-47–Cys-71, and Cys-56–Cys-75.

In terms of tissue distribution, expressed in nematocytes (in planulae and primary polyps). Is localized predominantly in the body column nematocytes and not in the tentacles (in primary polyps).

The protein resides in the nematocyst. The protein localises to the secreted. Neurotoxin. In vivo, induces contraction paralysis followed by death (within 2 hours) on zebrafish larvae. Also induces body contraction in Nematostella 11-dpf polyps. This Nematostella vectensis (Starlet sea anemone) protein is Neurotoxin ShK-like1.